Here is a 298-residue protein sequence, read N- to C-terminus: S-adenosyl-L-methionine-dependent methyltransferase dpfgK (298 aa).

It belongs to the methyltransferase superfamily.

It participates in secondary metabolite biosynthesis; terpenoid biosynthesis. S-adenosyl-L-methionine-dependent methyltransferase; part of the gene cluster that mediates the biosynthesis of diterpenoid pyrones. The first step of the pathway is the synthesis of the alpha-pyrone moiety by the polyketide synthase dpfgA via condensation of one acetyl-CoA starter unit with 3 malonyl-CoA units and 2 methylations. The alpha-pyrone is then combined with geranylgeranyl pyrophosphate (GGPP) formed by the GGPP synthase dpfgD through the action of the prenyltransferase dpfgC to yield a linear alpha-pyrone diterpenoid. Subsequent steps in the diterpenoid pyrone biosynthetic pathway involve the decalin core formation, which is initiated by the epoxidation of the C10-C11 olefin by the FAD-dependent oxidoreductase dpfgE, and is followed by a cyclization cascade catalyzed by the terpene cyclase dpfgB. The short chain dehydrogenase/reductase dpfgG then oxidizes the 8S hydroxy group to a ketone and the short chain dehydrogenase/reductase dpfgH reduces the ketone to the 8R hydroxy group to yield higginsianin B. Higginsianin B is further methylated by the methyltransferase dpfgI to produce the intermediate named FDDP B. The cytochrome P450 monooxygenase dfgpJ then catalyzes a three-step oxidation at C-27 to generate a carboxylic acid as well as C-26 hydroxylation. Finally, methyltransferase dpfgK methylates the carboxylic acid generated by dpfgJ, yielding the final diterpenoid pyrones from the pathway which were named FDDP D and FDDP E. This Gibberella zeae (strain ATCC MYA-4620 / CBS 123657 / FGSC 9075 / NRRL 31084 / PH-1) (Wheat head blight fungus) protein is S-adenosyl-L-methionine-dependent methyltransferase dpfgK.